The chain runs to 178 residues: Probable DNA-directed RNA polymerase subunit delta (178 aa).

Positions 14 to 81 constitute an HTH HARE-type domain; it reads LSMIEVAHAI…GENTWGLRTW (68 aa). Positions 120 to 143 are enriched in acidic residues; that stretch reads DDDVIDYDSDDPEDEEVEAEDTTS. The interval 120 to 178 is disordered; that stretch reads DDDVIDYDSDDPEDEEVEAEDTTSDDAPAFEDLSNDDDTDVLPDGIEGQLSELNEDDEN.

It belongs to the RpoE family. In terms of assembly, RNAP is composed of a core of 2 alpha, a beta and a beta' subunits. The core is associated with a delta subunit and one of several sigma factors.

Functionally, participates in both the initiation and recycling phases of transcription. In the presence of the delta subunit, RNAP displays an increased specificity of transcription, a decreased affinity for nucleic acids, and an increased efficiency of RNA synthesis because of enhanced recycling. The sequence is that of Probable DNA-directed RNA polymerase subunit delta from Pediococcus pentosaceus (strain ATCC 25745 / CCUG 21536 / LMG 10740 / 183-1w).